A 154-amino-acid chain; its full sequence is Protein X (154 aa).

The interval 68–117 is mitochondrial targeting sequence; it reads PCALRFTSARRMETTVNAHWNLPKVLHKRTLGLSAMSTTDLEAYFKDCVF.

It belongs to the orthohepadnavirus protein X family. As to quaternary structure, may form homodimer. May interact with host CEBPA, CFLAR, CREB1, DDB1, E4F1, HBXIP, HSPD1/HSP60, NFKBIA, POLR2E and SMAD4. Interacts with host SMC5-SMC6 complex and induces its degradation. Interacts with host TRPC4AP; leading to prevent ubiquitination of TRPC4AP. Interacts with host PLSCR1; this interaction promotes ubiquitination and degradation of HBx and impairs HBx-mediated cell proliferation. A fraction may be phosphorylated in insect cells and HepG2 cells, a human hepatoblastoma cell line. Phosphorylated in vitro by host protein kinase C or mitogen-activated protein kinase. N-acetylated in insect cells.

It is found in the host cytoplasm. Its subcellular location is the host nucleus. The protein localises to the host mitochondrion. Multifunctional protein that plays a role in silencing host antiviral defenses and promoting viral transcription. Does not seem to be essential for HBV infection. May be directly involved in development of cirrhosis and liver cancer (hepatocellular carcinoma). Most of cytosolic activities involve modulation of cytosolic calcium. The effect on apoptosis is controversial depending on the cell types in which the studies have been conducted. May induce apoptosis by localizing in mitochondria and causing loss of mitochondrial membrane potential. May also modulate apoptosis by binding host CFLAR, a key regulator of the death-inducing signaling complex (DISC). Promotes viral transcription by using the host E3 ubiquitin ligase DDB1 to target the SMC5-SMC6 complex to proteasomal degradation. This host complex would otherwise bind to viral episomal DNA, and prevents its transcription. Moderately stimulates transcription of many different viral and cellular transcription elements. Promoters and enhancers stimulated by HBx contain DNA binding sites for NF-kappa-B, AP-1, AP-2, c-EBP, ATF/CREB, or the calcium-activated factor NF-AT. The chain is Protein X from Hepatitis B virus genotype B2 (isolate Vietnam/9873/1997) (HBV-B).